A 529-amino-acid chain; its full sequence is ATP synthase subunit alpha (529 aa).

Residue 173–180 participates in ATP binding; the sequence is GDRQTGKT.

It belongs to the ATPase alpha/beta chains family. As to quaternary structure, F-type ATPases have 2 components, CF(1) - the catalytic core - and CF(0) - the membrane proton channel. CF(1) has five subunits: alpha(3), beta(3), gamma(1), delta(1), epsilon(1). CF(0) has three main subunits: a(1), b(2) and c(9-12). The alpha and beta chains form an alternating ring which encloses part of the gamma chain. CF(1) is attached to CF(0) by a central stalk formed by the gamma and epsilon chains, while a peripheral stalk is formed by the delta and b chains.

It localises to the cell membrane. It carries out the reaction ATP + H2O + 4 H(+)(in) = ADP + phosphate + 5 H(+)(out). In terms of biological role, produces ATP from ADP in the presence of a proton gradient across the membrane. The alpha chain is a regulatory subunit. This chain is ATP synthase subunit alpha, found in Streptomyces lividans.